The sequence spans 79 residues: Putative defensin-like protein 137 (79 aa).

Positions 1–24 (MKKYFQPSFVILIIFTVLVLGVVG) are cleaved as a signal peptide. Disulfide bonds link Cys33–Cys78, Cys42–Cys62, Cys47–Cys72, and Cys51–Cys74.

The protein belongs to the DEFL family.

The protein localises to the secreted. The sequence is that of Putative defensin-like protein 137 (LCR14) from Arabidopsis thaliana (Mouse-ear cress).